We begin with the raw amino-acid sequence, 439 residues long: GTPase Der (439 aa).

2 consecutive EngA-type G domains span residues 4–168 and 177–352; these read PIVA…KDDE and INIA…DNYT. GTP contacts are provided by residues 10–17, 57–61, 120–123, 183–190, 230–234, and 295–298; these read GRPNVGKS, DTGGI, NKID, GKPNVGKS, DTAGL, and NKWD. The region spanning 353–437 is the KH-like domain; that stretch reads KRVKTGVLND…GIKLEFRERK (85 aa).

This sequence belongs to the TRAFAC class TrmE-Era-EngA-EngB-Septin-like GTPase superfamily. EngA (Der) GTPase family. As to quaternary structure, associates with the 50S ribosomal subunit.

Its function is as follows. GTPase that plays an essential role in the late steps of ribosome biogenesis. This Clostridium botulinum (strain Langeland / NCTC 10281 / Type F) protein is GTPase Der.